We begin with the raw amino-acid sequence, 242 residues long: Octanoyltransferase (242 aa).

The BPL/LPL catalytic domain maps to 31 to 206 (SQTTDEIWFL…LFLKNFGYNQ (176 aa)). Residues 70–77 (RGGQVTYH), 137–139 (SIG), and 150–152 (GLA) each bind substrate. The active-site Acyl-thioester intermediate is the Cys-168.

The protein belongs to the LipB family.

Its subcellular location is the cytoplasm. The enzyme catalyses octanoyl-[ACP] + L-lysyl-[protein] = N(6)-octanoyl-L-lysyl-[protein] + holo-[ACP] + H(+). It participates in protein modification; protein lipoylation via endogenous pathway; protein N(6)-(lipoyl)lysine from octanoyl-[acyl-carrier-protein]: step 1/2. Functionally, catalyzes the transfer of endogenously produced octanoic acid from octanoyl-acyl-carrier-protein onto the lipoyl domains of lipoate-dependent enzymes. Lipoyl-ACP can also act as a substrate although octanoyl-ACP is likely to be the physiological substrate. The chain is Octanoyltransferase from Coxiella burnetii (strain Dugway 5J108-111).